The following is a 120-amino-acid chain: NAD(P)H-quinone oxidoreductase subunit 3 (120 aa).

A run of 3 helical transmembrane segments spans residues 10 to 30, 64 to 84, and 89 to 109; these read FLGF…TNLI, MFAL…PWAV, and LGLL…IALA.

The protein belongs to the complex I subunit 3 family. As to quaternary structure, NDH-1 can be composed of about 15 different subunits; different subcomplexes with different compositions have been identified which probably have different functions.

Its subcellular location is the cellular thylakoid membrane. The catalysed reaction is a plastoquinone + NADH + (n+1) H(+)(in) = a plastoquinol + NAD(+) + n H(+)(out). It carries out the reaction a plastoquinone + NADPH + (n+1) H(+)(in) = a plastoquinol + NADP(+) + n H(+)(out). Its function is as follows. NDH-1 shuttles electrons from an unknown electron donor, via FMN and iron-sulfur (Fe-S) centers, to quinones in the respiratory and/or the photosynthetic chain. The immediate electron acceptor for the enzyme in this species is believed to be plastoquinone. Couples the redox reaction to proton translocation, and thus conserves the redox energy in a proton gradient. Cyanobacterial NDH-1 also plays a role in inorganic carbon-concentration. The chain is NAD(P)H-quinone oxidoreductase subunit 3 from Prochlorococcus marinus (strain MIT 9301).